The primary structure comprises 304 residues: Granaticin polyketide synthase bifunctional cyclase/dehydratase (304 aa).

Its pathway is antifungal biosynthesis; monensin biosynthesis. In terms of biological role, is needed for correct cyclization of the oligoketide leading to isochromanequinone formation. In Streptomyces virginiae (Streptomyces cinnamonensis), this protein is Granaticin polyketide synthase bifunctional cyclase/dehydratase.